We begin with the raw amino-acid sequence, 175 residues long: Adenine phosphoribosyltransferase (175 aa).

This sequence belongs to the purine/pyrimidine phosphoribosyltransferase family. In terms of assembly, homodimer.

The protein resides in the cytoplasm. It carries out the reaction AMP + diphosphate = 5-phospho-alpha-D-ribose 1-diphosphate + adenine. It functions in the pathway purine metabolism; AMP biosynthesis via salvage pathway; AMP from adenine: step 1/1. In terms of biological role, catalyzes a salvage reaction resulting in the formation of AMP, that is energically less costly than de novo synthesis. The protein is Adenine phosphoribosyltransferase of Parvibaculum lavamentivorans (strain DS-1 / DSM 13023 / NCIMB 13966).